We begin with the raw amino-acid sequence, 78 residues long: Surfactant-associated protein 2 (78 aa).

Residues 1-19 (MGAGLPLVLLLTLVGSSQG) form the signal peptide. Residue N37 is glycosylated (N-linked (GlcNAc...) asparagine).

Post-translationally, N-glycosylated.

It localises to the secreted. Its subcellular location is the cytoplasmic vesicle. The protein localises to the secretory vesicle. It is found in the golgi apparatus. Functionally, putative surfactant protein. This chain is Surfactant-associated protein 2 (SFTA2), found in Bos taurus (Bovine).